The sequence spans 611 residues: Fatty acid photodecarboxylase, chloroplastic (611 aa).

Residues 1-22 (MMLGPKTVTRGATKGAAPRSMA) form a disordered region. The N-terminal 36 residues, 1–36 (MMLGPKTVTRGATKGAAPRSMAARRVGGARRLSVRA), are a transit peptide targeting the chloroplast. FAD is bound by residues 55 to 56 (TA), glutamate 76, methionine 125, serine 129, and 133 to 136 (NATL). Residues cysteine 392, arginine 412, tyrosine 427, and glutamine 447 each contribute to the hexadecanoate site. Glycine 582 contacts FAD.

This sequence belongs to the GMC oxidoreductase family. The cofactor is FAD.

It localises to the plastid. The protein resides in the chloroplast. The catalysed reaction is a long-chain fatty acid + hnu + H(+) = a long-chain alkane + CO2. It carries out the reaction hnu + hexadecanoate + H(+) = pentadecane + CO2. Activated by blue light and repressed by red light. Its function is as follows. Catalyzes the decarboxylation of free fatty acids to n-alkanes or n-alkenes in response to blue light. Substrate preference is toward fatty acids with C17 or C18 chains. Saturated fatty acids are converted to alkanes, not alkenes. The decarboxylation is initiated through electron abstraction from the fatty acid by the photo-excited FAD. The protein is Fatty acid photodecarboxylase, chloroplastic of Chlamydomonas reinhardtii (Chlamydomonas smithii).